Reading from the N-terminus, the 140-residue chain is Ribonucleases P/MRP protein subunit POP7 (140 aa).

Positions methionine 1–leucine 21 are disordered. Serine 115 is modified (phosphoserine).

This sequence belongs to the histone-like Alba family. As to quaternary structure, component of nuclear RNase P and RNase MRP complexes. RNase P consists of an RNA moiety and at least 9 protein subunits including POP1, POP3, POP4, POP5, POP6, POP7, POP8, RPP1 and RPR2. RNase MRP complex consists of an RNA moiety and at least 10 protein subunits including POP1, POP3, POP4, POP5, POP6, POP7, POP8, RMP1, RPP1 and SNM1, many of which are shared with the RNase P complex.

It localises to the nucleus. The enzyme catalyses Endonucleolytic cleavage of RNA, removing 5'-extranucleotides from tRNA precursor.. Component of ribonuclease P, a protein complex that generates mature tRNA molecules by cleaving their 5'-ends. Also a component of RNase MRP, which cleaves pre-rRNA sequences. This is Ribonucleases P/MRP protein subunit POP7 (POP7) from Saccharomyces cerevisiae (strain ATCC 204508 / S288c) (Baker's yeast).